An 82-amino-acid chain; its full sequence is Small ribosomal subunit protein bS16 (82 aa).

This sequence belongs to the bacterial ribosomal protein bS16 family.

This chain is Small ribosomal subunit protein bS16, found in Francisella tularensis subsp. holarctica (strain FTNF002-00 / FTA).